The sequence spans 218 residues: Guanylate kinase (218 aa).

Residues 5–188 (GNLFILSAPS…ALLDLTTIVN (184 aa)) enclose the Guanylate kinase-like domain. Residue 12 to 19 (APSGAGKS) participates in ATP binding.

The protein belongs to the guanylate kinase family.

It is found in the cytoplasm. The catalysed reaction is GMP + ATP = GDP + ADP. Essential for recycling GMP and indirectly, cGMP. The sequence is that of Guanylate kinase from Colwellia psychrerythraea (strain 34H / ATCC BAA-681) (Vibrio psychroerythus).